The following is a 308-amino-acid chain: Putative S-adenosyl-L-methionine-dependent methyltransferase Mjls_1073 (308 aa).

Residues aspartate 133 and 162–163 (DL) each bind S-adenosyl-L-methionine.

Belongs to the UPF0677 family.

In terms of biological role, exhibits S-adenosyl-L-methionine-dependent methyltransferase activity. The chain is Putative S-adenosyl-L-methionine-dependent methyltransferase Mjls_1073 from Mycobacterium sp. (strain JLS).